The sequence spans 365 residues: Chorismate synthase (365 aa).

NADP(+)-binding residues include Arg-48 and Arg-54. Residues 125–127, 237–238, Gly-277, 292–296, and Arg-318 contribute to the FMN site; these read RSS, NA, and KPTSS.

This sequence belongs to the chorismate synthase family. As to quaternary structure, homotetramer. It depends on FMNH2 as a cofactor.

It catalyses the reaction 5-O-(1-carboxyvinyl)-3-phosphoshikimate = chorismate + phosphate. It participates in metabolic intermediate biosynthesis; chorismate biosynthesis; chorismate from D-erythrose 4-phosphate and phosphoenolpyruvate: step 7/7. In terms of biological role, catalyzes the anti-1,4-elimination of the C-3 phosphate and the C-6 proR hydrogen from 5-enolpyruvylshikimate-3-phosphate (EPSP) to yield chorismate, which is the branch point compound that serves as the starting substrate for the three terminal pathways of aromatic amino acid biosynthesis. This reaction introduces a second double bond into the aromatic ring system. This Polaromonas naphthalenivorans (strain CJ2) protein is Chorismate synthase.